Consider the following 263-residue polypeptide: Izumo sperm-egg fusion protein 3 (263 aa).

An N-terminal signal peptide occupies residues 1–22; the sequence is MGDLWVLLFSSLSLAAFHGVRG. The Extracellular segment spans residues 23–176; that stretch reads CLECDPKFTE…EDPKTAENRE (154 aa). N-linked (GlcNAc...) asparagine glycosylation is found at asparagine 98 and asparagine 128. The helical transmembrane segment at 177–197 threads the bilayer; the sequence is ISLYLIFIAEAVILASAVLLF. The Cytoplasmic portion of the chain corresponds to 198-263; that stretch reads HVCISHRRKM…CAESEMQTGT (66 aa). The segment at 241–263 is disordered; that stretch reads GRSNSNSLTGEPTCAESEMQTGT.

The protein belongs to the Izumo family. Monomer and homodimer. Sperm-specific (at protein level).

The protein localises to the cell membrane. Its subcellular location is the cytoplasmic vesicle. It localises to the secretory vesicle. It is found in the acrosome inner membrane. In terms of biological role, plays an important role in the biogenesis of the acrosome during sperm development. The protein is Izumo sperm-egg fusion protein 3 (Izumo3) of Mus musculus (Mouse).